Here is a 476-residue protein sequence, read N- to C-terminus: Ribulose bisphosphate carboxylase/oxygenase activase 1, chloroplastic (476 aa).

A chloroplast-targeting transit peptide spans 1-56; sequence MAAAYSTVGAVNRAPLSLNGSGARASLVPSTAFFGSSLKKSAAKFPKASSGNFKIV. 165–172 contacts ATP; it reads GGKGQGKS.

It belongs to the RuBisCO activase family.

It localises to the plastid. The protein resides in the chloroplast stroma. Functionally, activation of RuBisCO (ribulose-1,5-bisphosphate carboxylase/oxygenase; EC 4.1.1.39) involves the ATP-dependent carboxylation of the epsilon-amino group of lysine leading to a carbamate structure. The sequence is that of Ribulose bisphosphate carboxylase/oxygenase activase 1, chloroplastic (RCA1) from Larrea tridentata (Creosote bush).